Reading from the N-terminus, the 307-residue chain is Protoheme IX farnesyltransferase (307 aa).

The next 8 helical transmembrane spans lie at 32–52 (MGIV…ALHF), 65–85 (FFTI…NNYI), 108–128 (PGFA…FLLL), 131–151 (PMAV…YSLW), 158–178 (LNTV…WAAI), 186–206 (IAWM…LALA), 251–271 (LGIT…VLGF), and 287–307 (FVYS…VTFF).

It belongs to the UbiA prenyltransferase family. Protoheme IX farnesyltransferase subfamily. As to quaternary structure, interacts with CtaA.

The protein resides in the cell membrane. The catalysed reaction is heme b + (2E,6E)-farnesyl diphosphate + H2O = Fe(II)-heme o + diphosphate. It participates in porphyrin-containing compound metabolism; heme O biosynthesis; heme O from protoheme: step 1/1. Its function is as follows. Converts heme B (protoheme IX) to heme O by substitution of the vinyl group on carbon 2 of heme B porphyrin ring with a hydroxyethyl farnesyl side group. This is Protoheme IX farnesyltransferase from Bacillus cereus (strain ATCC 10987 / NRS 248).